Here is a 1402-residue protein sequence, read N- to C-terminus: DNA-directed RNA polymerase subunit beta' (1402 aa).

The Zn(2+) site is built by Cys-71, Cys-73, Cys-86, and Cys-89. Mg(2+)-binding residues include Asp-462, Asp-464, and Asp-466. Residues Cys-811, Cys-885, Cys-892, and Cys-895 each coordinate Zn(2+).

Belongs to the RNA polymerase beta' chain family. As to quaternary structure, the RNAP catalytic core consists of 2 alpha, 1 beta, 1 beta' and 1 omega subunit. When a sigma factor is associated with the core the holoenzyme is formed, which can initiate transcription. It depends on Mg(2+) as a cofactor. The cofactor is Zn(2+).

The enzyme catalyses RNA(n) + a ribonucleoside 5'-triphosphate = RNA(n+1) + diphosphate. In terms of biological role, DNA-dependent RNA polymerase catalyzes the transcription of DNA into RNA using the four ribonucleoside triphosphates as substrates. In Rhizobium etli (strain ATCC 51251 / DSM 11541 / JCM 21823 / NBRC 15573 / CFN 42), this protein is DNA-directed RNA polymerase subunit beta'.